Here is a 276-residue protein sequence, read N- to C-terminus: Secreted RxLR effector protein 120 (276 aa).

A signal peptide spans M1 to A21. Positions Q48 to R65 match the RxLR-dEER motif. The interval G97–F130 is disordered. Positions R101–K119 are enriched in basic and acidic residues.

Belongs to the RxLR effector family.

The protein localises to the secreted. The protein resides in the host nucleus. Functionally, secreted effector that completely suppresses the host cell death induced by cell death-inducing proteins. In Plasmopara viticola (Downy mildew of grapevine), this protein is Secreted RxLR effector protein 120.